A 441-amino-acid chain; its full sequence is Protein MPE1 (441 aa).

The DWNN domain maps to 5 to 78; it reads IFYRFKSQRN…STSVIVKRSP (74 aa). The segment at 180-197 adopts a CCHC-type zinc-finger fold; sequence YMCYRCGGRDHWIKNCPT. Ser-221 bears the Phosphoserine mark. Positions 355–364 are enriched in basic and acidic residues; it reads KKQEELHGSS. A disordered region spans residues 355–400; that stretch reads KKQEELHGSSKDGNQPETKKMKLMDPTGTAGLNNNTSLPTSVNNGG. The span at 384–400 shows a compositional bias: polar residues; the sequence is AGLNNNTSLPTSVNNGG.

As to quaternary structure, component of the cleavage and polyadenylation factor (CPF) complex, which is composed of PTI1, SYC1, SSU72, GLC7, MPE1, REF2, PFS2, PTA1, YSH1/BRR5, SWD2, CFT2/YDH1, YTH1, CFT1/YHH1, FIP1 and PAP1.

It localises to the nucleus. Functionally, component of the cleavage and polyadenylation factor (CPF) complex, which plays a key role in polyadenylation-dependent pre-mRNA 3'-end formation and cooperates with cleavage factors including the CFIA complex and NAB4/CFIB. The sequence is that of Protein MPE1 (MPE1) from Saccharomyces cerevisiae (strain ATCC 204508 / S288c) (Baker's yeast).